A 384-amino-acid chain; its full sequence is Transcription factor TGA3 (384 aa).

Disordered regions lie at residues 36–70 (KSDINNITSNQNNNQSSSTTLEVDARPEADDNNRV) and 76–95 (YNNSLEAEPSSNNDQDEDRI). Residues 39–55 (INNITSNQNNNQSSSTT) are compositionally biased toward low complexity. Over residues 58 to 68 (VDARPEADDNN) the composition is skewed to basic and acidic residues. Over residues 76 to 88 (YNNSLEAEPSSNN) the composition is skewed to polar residues. A bZIP domain is found at 96 to 138 (NDKMKRRLAQNREAARKSRLRKKAHVQQLEESRLKLSQLEQEL). A basic motif region spans residues 98–118 (KMKRRLAQNREAARKSRLRKK). A Nuclear localization signal motif is present at residues 99-106 (MKRRLAQN). Positions 117 to 144 (KKAHVQQLEESRLKLSQLEQELVRARQQ) form a coiled coil. Residues 124 to 138 (LEESRLKLSQLEQEL) form a leucine-zipper region. In terms of domain architecture, DOG1 spans 167-379 (IAAFEMEYTH…RALSSLWAAR (213 aa)). Hexadecanoate is bound by residues lysine 219, arginine 236, and phenylalanine 249. A coiled-coil region spans residues 267-296 (DQQLLEVRNLQQSSQQAEEALSQGLDKLQQ).

The protein belongs to the bZIP family. Binds DNA as a dimer. Interacts with NPR3, NPR4 and sumoylated NPR1. Interacts with GRXC7/ROXY1. Expressed in the whole plant.

The protein resides in the nucleus. Functionally, transcriptional activator that binds specifically to the DNA sequence 5'-TGACG-3'. Recognizes ocs elements like the as-1 motif of the cauliflower mosaic virus 35S promoter. Binding to the as-1-like cis elements mediate auxin- and salicylic acid-inducible transcription. Required to induce the systemic acquired resistance (SAR) via the regulation of pathogenesis-related genes expression. Binding to the as-1 element of PR-1 promoter is salicylic acid-inducible and mediated by sumoylated NPR1. Could also bind to the Hex-motif (5'-TGACGTGG-3') another cis-acting element found in plant histone promoters. The chain is Transcription factor TGA3 from Arabidopsis thaliana (Mouse-ear cress).